The chain runs to 410 residues: HAUS augmin-like complex subunit 8 (410 aa).

Positions 1 to 104 (MADSSGRGAG…HGTAPPDLDL (104 aa)) are disordered. The residue at position 2 (alanine 2) is an N-acetylalanine. A Phosphoserine modification is found at serine 105. Residues 118 to 143 (QLAKTISKKPESTSFSAPRKKSPDLS) form a disordered region. A coiled-coil region spans residues 156 to 208 (LTLLSVKMENNLAEFERRAEKNLLIMCKEKEKLQKKAHELKRRLLLSQRKREL). The disordered stretch occupies residues 353-410 (ACRESGGAPKNTPLSEDDNPGASSAPAQATFISPSEDFSSSSQAEVPPSLSRSGRDLS). Residues 373-384 (GASSAPAQATFI) show a composition bias toward polar residues. Over residues 385–394 (SPSEDFSSSS) the composition is skewed to low complexity.

It belongs to the HAUS8 family. Component of the HAUS augmin-like complex. The complex interacts with the gamma-tubulin ring complex and this interaction is required for spindle assembly. Associates with microtubules. The interaction with microtubules is strong during mitosis, while it is weak or absent during interphase. It is unclear whether this interaction is direct or indirect. Interacts with EML3 (phosphorylated at 'Thr-881') and TUBG1.

It localises to the cytoplasm. The protein localises to the cytoskeleton. It is found in the microtubule organizing center. The protein resides in the centrosome. Its subcellular location is the spindle. It localises to the spindle pole. Functionally, contributes to mitotic spindle assembly, maintenance of centrosome integrity and completion of cytokinesis as part of the HAUS augmin-like complex. In Homo sapiens (Human), this protein is HAUS augmin-like complex subunit 8 (HAUS8).